The sequence spans 293 residues: ATP synthase gamma chain (293 aa).

It belongs to the ATPase gamma chain family. As to quaternary structure, F-type ATPases have 2 components, CF(1) - the catalytic core - and CF(0) - the membrane proton channel. CF(1) has five subunits: alpha(3), beta(3), gamma(1), delta(1), epsilon(1). CF(0) has three main subunits: a, b and c.

It is found in the cell inner membrane. Its function is as follows. Produces ATP from ADP in the presence of a proton gradient across the membrane. The gamma chain is believed to be important in regulating ATPase activity and the flow of protons through the CF(0) complex. This chain is ATP synthase gamma chain, found in Chlorobium chlorochromatii (strain CaD3).